The chain runs to 283 residues: 3-methyl-2-oxobutanoate hydroxymethyltransferase (283 aa).

Mg(2+)-binding residues include aspartate 44 and aspartate 83. 3-methyl-2-oxobutanoate is bound by residues 44-45, aspartate 83, and lysine 112; that span reads DS. Residue glutamate 114 coordinates Mg(2+). Glutamate 181 (proton acceptor) is an active-site residue.

Belongs to the PanB family. Homodecamer; pentamer of dimers. The cofactor is Mg(2+).

Its subcellular location is the cytoplasm. The enzyme catalyses 3-methyl-2-oxobutanoate + (6R)-5,10-methylene-5,6,7,8-tetrahydrofolate + H2O = 2-dehydropantoate + (6S)-5,6,7,8-tetrahydrofolate. Its pathway is cofactor biosynthesis; coenzyme A biosynthesis. Its function is as follows. Catalyzes the reversible reaction in which hydroxymethyl group from 5,10-methylenetetrahydrofolate is transferred onto alpha-ketoisovalerate to form ketopantoate. In Pyrococcus furiosus (strain ATCC 43587 / DSM 3638 / JCM 8422 / Vc1), this protein is 3-methyl-2-oxobutanoate hydroxymethyltransferase.